We begin with the raw amino-acid sequence, 341 residues long: Methionine import ATP-binding protein MetN (341 aa).

The ABC transporter domain occupies 2–237 (IELCGLKKSF…PESLARKMLY (236 aa)). 34-41 (GKSGAGKS) serves as a coordination point for ATP.

The protein belongs to the ABC transporter superfamily. Methionine importer (TC 3.A.1.24) family. In terms of assembly, the complex is composed of two ATP-binding proteins (MetN), two transmembrane proteins (MetI) and a solute-binding protein (MetQ).

It localises to the cell inner membrane. The enzyme catalyses L-methionine(out) + ATP + H2O = L-methionine(in) + ADP + phosphate + H(+). It carries out the reaction D-methionine(out) + ATP + H2O = D-methionine(in) + ADP + phosphate + H(+). In terms of biological role, part of the ABC transporter complex MetNIQ involved in methionine import. Responsible for energy coupling to the transport system. The chain is Methionine import ATP-binding protein MetN from Legionella pneumophila (strain Lens).